A 1591-amino-acid chain; its full sequence is Mediator of RNA polymerase II transcription subunit 12 (1591 aa).

Disordered stretches follow at residues 1-116 (MIPH…LSWR), 132-176 (GAGE…AAGL), and 1488-1530 (NATL…SLGV). Positions 40-53 (EQSSMPAPQPQTGP) are enriched in polar residues. Residues 66 to 80 (AQEREHPAKRLRLDI) are compositionally biased toward basic and acidic residues. Positions 99–108 (PKSTPVSTSS) are enriched in low complexity. The segment covering 151-162 (LSPPSFPAPPWK) has biased composition (pro residues). Residues 1496–1512 (PSPAASGSTPAPTPSGS) show a composition bias toward low complexity.

The protein belongs to the Mediator complex subunit 12 family. As to quaternary structure, component of the srb8-11 complex, which itself associates with the Mediator complex.

Its subcellular location is the nucleus. In terms of biological role, component of the srb8-11 complex. The srb8-11 complex is a regulatory module of the Mediator complex which is itself involved in regulation of basal and activated RNA polymerase II-dependent transcription. The srb8-11 complex may be involved in the transcriptional repression of a subset of genes regulated by Mediator. It may inhibit the association of the Mediator complex with RNA polymerase II to form the holoenzyme complex. This is Mediator of RNA polymerase II transcription subunit 12 (srb8) from Aspergillus clavatus (strain ATCC 1007 / CBS 513.65 / DSM 816 / NCTC 3887 / NRRL 1 / QM 1276 / 107).